The following is a 192-amino-acid chain: MAEQQGRELEAECPVCWNPFNNTFHTPKMLDCCHSFCVECLAHLSLVTPARRRLLCPLCRQPTVLASGQPVTDLPTDTAMLALLRLEPHHVILEGHQLCLKDQPKSRYFLRQPQVYTLDLGPQPGGQTGPPPDTASATVSTPILIPSHHSLRECFRNPQFRIFAYLMAVILSVTLLLIFSIFWTKQFLWGVG.

Residues 1–161 (MAEQQGRELE…RECFRNPQFR (161 aa)) lie on the Cytoplasmic side of the membrane. The RING-type zinc finger occupies 13–60 (CPVCWNPFNNTFHTPKMLDCCHSFCVECLAHLSLVTPARRRLLCPLCR). The chain crosses the membrane as a helical; Anchor for type IV membrane protein span at residues 162–182 (IFAYLMAVILSVTLLLIFSIF). Residues 183–192 (WTKQFLWGVG) lie on the Lumenal side of the membrane.

In terms of assembly, interacts with FATE1. Interacts with SEC16A. Interacts with BCL2L1. Post-translationally, autoubiquitinated (in vitro). As to expression, kidney and testis.

The protein localises to the endoplasmic reticulum membrane. It localises to the endoplasmic reticulum. The protein resides in the golgi apparatus. It is found in the cis-Golgi network membrane. Its subcellular location is the lysosome membrane. The catalysed reaction is S-ubiquitinyl-[E2 ubiquitin-conjugating enzyme]-L-cysteine + [acceptor protein]-L-lysine = [E2 ubiquitin-conjugating enzyme]-L-cysteine + N(6)-ubiquitinyl-[acceptor protein]-L-lysine.. Its pathway is protein modification; protein ubiquitination. Functionally, acts as an E3 ubiquitin ligase catalyzing the covalent attachment of ubiquitin moieties onto substrate proteins. Triggers apoptosis in response to prolonged ER stress by mediating the polyubiquitination and subsequent proteasomal degradation of BCL2L1. May collaborate with FATE1 to restrain BIK protein levels thus regulating apoptotic signaling. This is E3 ubiquitin-protein ligase RNF183 (RNF183) from Homo sapiens (Human).